A 185-amino-acid polypeptide reads, in one-letter code: Thioredoxin F2, chloroplastic (185 aa).

Positions 59 to 184 constitute a Thioredoxin domain; it reads RRIGSCVVRC…LLAAIEAARS (126 aa). Catalysis depends on nucleophile residues Cys-109 and Cys-112. Cys-109 and Cys-112 are joined by a disulfide. An S-glutathionyl cysteine; transient modification is found at Cys-136.

The protein belongs to the thioredoxin family. Plant F-type subfamily. In terms of processing, glutathionylation at Cys-136 decreases its ability to be reduced by ferredoxin-thioredoxin reductase and reduces its efficiency in activating target chloroplastic enzymes.

The protein resides in the plastid. It is found in the chloroplast stroma. In terms of biological role, probable thiol-disulfide oxidoreductase involved in the redox regulation of enzymes of both reductive pentose phosphate pathway (Calvin-Benson cycle) and oxidative pentose phosphate pathway. The protein is Thioredoxin F2, chloroplastic of Arabidopsis thaliana (Mouse-ear cress).